The chain runs to 200 residues: Probable molybdenum cofactor guanylyltransferase (200 aa).

GTP-binding positions include 9–11, K21, D69, and D100; that span reads LAG. Residue D100 coordinates Mg(2+).

Belongs to the MobA family. The cofactor is Mg(2+).

The protein resides in the cytoplasm. The enzyme catalyses Mo-molybdopterin + GTP + H(+) = Mo-molybdopterin guanine dinucleotide + diphosphate. Functionally, transfers a GMP moiety from GTP to Mo-molybdopterin (Mo-MPT) cofactor (Moco or molybdenum cofactor) to form Mo-molybdopterin guanine dinucleotide (Mo-MGD) cofactor. This chain is Probable molybdenum cofactor guanylyltransferase, found in Bacillus cereus (strain B4264).